The chain runs to 255 residues: Protein BEAN1 (255 aa).

The chain crosses the membrane as a helical span at residues 37 to 57; it reads VLVASAVIGVVITLSCITIIV. Basic residues predominate over residues 69 to 90; sequence QRHHHRHRRHHHHHRHRRRRHR. 2 disordered regions span residues 69-109 and 160-255; these read QRHH…MPYA and DAPP…ERIV. The segment covering 193–206 has biased composition (polar residues); sequence QRTQGQSRLHTVSM. Positions 217–226 are enriched in low complexity; sequence GTGSPSDLLP. A compositionally biased stretch (polar residues) spans 234-243; that stretch reads PSNSQGSPIP. Pro residues predominate over residues 244-255; it reads TQAPMPSPERIV.

Interacts with NEDD4.

Its subcellular location is the membrane. In Mus musculus (Mouse), this protein is Protein BEAN1 (Bean1).